A 290-amino-acid polypeptide reads, in one-letter code: 4-diphosphocytidyl-2-C-methyl-D-erythritol kinase (290 aa).

Lysine 13 is an active-site residue. Residue 96–106 coordinates ATP; the sequence is PMGGGIGGGSS. The active site involves aspartate 138.

This sequence belongs to the GHMP kinase family. IspE subfamily.

The catalysed reaction is 4-CDP-2-C-methyl-D-erythritol + ATP = 4-CDP-2-C-methyl-D-erythritol 2-phosphate + ADP + H(+). It participates in isoprenoid biosynthesis; isopentenyl diphosphate biosynthesis via DXP pathway; isopentenyl diphosphate from 1-deoxy-D-xylulose 5-phosphate: step 3/6. Catalyzes the phosphorylation of the position 2 hydroxy group of 4-diphosphocytidyl-2C-methyl-D-erythritol. The protein is 4-diphosphocytidyl-2-C-methyl-D-erythritol kinase of Vibrio cholerae serotype O1 (strain ATCC 39541 / Classical Ogawa 395 / O395).